We begin with the raw amino-acid sequence, 494 residues long: AAA-ATPase At2g18190 (494 aa).

A helical transmembrane segment spans residues 13–29 (SSLFTAYASLTGFLMLF). 251-258 (GPPGTGKS) provides a ligand contact to ATP. Over residues 459–470 (TCRKLDGDDKHN) the composition is skewed to basic and acidic residues. The tract at residues 459–494 (TCRKLDGDDKHNVSSTNDLKKTKKKKKGGKGKAKGN) is disordered. The segment covering 479–494 (KTKKKKKGGKGKAKGN) has biased composition (basic residues).

It belongs to the AAA ATPase family. BCS1 subfamily. Mg(2+) serves as cofactor.

The protein localises to the membrane. The enzyme catalyses ATP + H2O = ADP + phosphate + H(+). The polypeptide is AAA-ATPase At2g18190 (Arabidopsis thaliana (Mouse-ear cress)).